We begin with the raw amino-acid sequence, 238 residues long: Outer membrane protein A (238 aa).

Beta stranded transmembrane passes span 1–8 (LTAKLGYP), 13–21 (LDIYTRLGG), 43–52 (PVFAGGVEYA), 57–64 (IATRLEYQ), and 83–91 (LLSVGVSYR). 3 repeat units span residues 104–105 (AP), 106–107 (AP), and 108–109 (AP). The segment at 104 to 109 (APAPAP) is 3 X 2 AA tandem repeats of A-P. Residues 111–238 (VQTKHFTLKS…RRVEIEVKGI (128 aa)) enclose the OmpA-like domain. A disulfide bond links cysteine 212 and cysteine 224.

The protein belongs to the outer membrane OOP (TC 1.B.6) superfamily. OmpA family. Monomer and homodimer.

The protein localises to the cell outer membrane. Functionally, with TolR probably plays a role in maintaining the position of the peptidoglycan cell wall in the periplasm. Acts as a porin with low permeability that allows slow penetration of small solutes; an internal gate slows down solute passage. In Citrobacter freundii, this protein is Outer membrane protein A.